A 220-amino-acid polypeptide reads, in one-letter code: Octanoyltransferase (220 aa).

A BPL/LPL catalytic domain is found at 34 to 209 (ENSQDEIWVV…TLSQELGLAN (176 aa)). Substrate-binding positions include 73–80 (RGGQVTYH), 140–142 (SLG), and 153–155 (GLA). The Acyl-thioester intermediate role is filled by C171.

Belongs to the LipB family.

It is found in the cytoplasm. It catalyses the reaction octanoyl-[ACP] + L-lysyl-[protein] = N(6)-octanoyl-L-lysyl-[protein] + holo-[ACP] + H(+). The protein operates within protein modification; protein lipoylation via endogenous pathway; protein N(6)-(lipoyl)lysine from octanoyl-[acyl-carrier-protein]: step 1/2. Catalyzes the transfer of endogenously produced octanoic acid from octanoyl-acyl-carrier-protein onto the lipoyl domains of lipoate-dependent enzymes. Lipoyl-ACP can also act as a substrate although octanoyl-ACP is likely to be the physiological substrate. In Shewanella piezotolerans (strain WP3 / JCM 13877), this protein is Octanoyltransferase.